A 315-amino-acid chain; its full sequence is Acetyl-coenzyme A carboxylase carboxyl transferase subunit alpha (315 aa).

One can recognise a CoA carboxyltransferase C-terminal domain in the interval 36–289 (LSKKRLELME…RKAVAAELKI (254 aa)).

Belongs to the AccA family. As to quaternary structure, acetyl-CoA carboxylase is a heterohexamer composed of biotin carboxyl carrier protein (AccB), biotin carboxylase (AccC) and two subunits each of ACCase subunit alpha (AccA) and ACCase subunit beta (AccD).

It localises to the cytoplasm. The enzyme catalyses N(6)-carboxybiotinyl-L-lysyl-[protein] + acetyl-CoA = N(6)-biotinyl-L-lysyl-[protein] + malonyl-CoA. Its pathway is lipid metabolism; malonyl-CoA biosynthesis; malonyl-CoA from acetyl-CoA: step 1/1. Its function is as follows. Component of the acetyl coenzyme A carboxylase (ACC) complex. First, biotin carboxylase catalyzes the carboxylation of biotin on its carrier protein (BCCP) and then the CO(2) group is transferred by the carboxyltransferase to acetyl-CoA to form malonyl-CoA. The chain is Acetyl-coenzyme A carboxylase carboxyl transferase subunit alpha from Francisella tularensis subsp. tularensis (strain FSC 198).